The chain runs to 129 residues: Small ribosomal subunit protein uS11 (129 aa).

The protein belongs to the universal ribosomal protein uS11 family. As to quaternary structure, part of the 30S ribosomal subunit. Interacts with proteins S7 and S18. Binds to IF-3.

Its function is as follows. Located on the platform of the 30S subunit, it bridges several disparate RNA helices of the 16S rRNA. Forms part of the Shine-Dalgarno cleft in the 70S ribosome. This Nitratidesulfovibrio vulgaris (strain ATCC 29579 / DSM 644 / CCUG 34227 / NCIMB 8303 / VKM B-1760 / Hildenborough) (Desulfovibrio vulgaris) protein is Small ribosomal subunit protein uS11.